The sequence spans 1004 residues: DNA-directed RNA polymerase subunit beta' (1004 aa).

Mg(2+) contacts are provided by D388, D390, and D392. C757, C831, C838, and C841 together coordinate Zn(2+).

This sequence belongs to the RNA polymerase beta' chain family. As to quaternary structure, the RNAP catalytic core consists of 2 alpha, 1 beta, 1 beta' and 1 omega subunit. When a sigma factor is associated with the core the holoenzyme is formed, which can initiate transcription. Requires Mg(2+) as cofactor. Zn(2+) serves as cofactor.

It catalyses the reaction RNA(n) + a ribonucleoside 5'-triphosphate = RNA(n+1) + diphosphate. Functionally, DNA-dependent RNA polymerase catalyzes the transcription of DNA into RNA using the four ribonucleoside triphosphates as substrates. This Oenococcus oeni (Leuconostoc oenos) protein is DNA-directed RNA polymerase subunit beta'.